Reading from the N-terminus, the 235-residue chain is Uridylate kinase (235 aa).

10 to 13 is an ATP binding site; sequence KLSG. G52 contacts UMP. ATP-binding residues include G53 and R57. Residues D72 and 133–140 each bind UMP; that span reads TSNPYFST. ATP contacts are provided by T160, Y166, and D169.

It belongs to the UMP kinase family. As to quaternary structure, homohexamer.

The protein resides in the cytoplasm. The catalysed reaction is UMP + ATP = UDP + ADP. It participates in pyrimidine metabolism; CTP biosynthesis via de novo pathway; UDP from UMP (UMPK route): step 1/1. Inhibited by UTP. Catalyzes the reversible phosphorylation of UMP to UDP. The sequence is that of Uridylate kinase from Solibacter usitatus (strain Ellin6076).